A 120-amino-acid polypeptide reads, in one-letter code: MLKFTAEHEWLELDGDVATVGITTYAVEQLGDLVFVELPEVGKSFSKNDDAATVESVKAASEVYCPLDGEITAVNDAIVADPSLINSDPQGAGWFFKLKLKNRADADGLLDEAAYKELIA.

Residues Val17–Lys99 enclose the Lipoyl-binding domain. Lys58 carries the post-translational modification N6-lipoyllysine.

This sequence belongs to the GcvH family. The glycine cleavage system is composed of four proteins: P, T, L and H. (R)-lipoate is required as a cofactor.

Functionally, the glycine cleavage system catalyzes the degradation of glycine. The H protein shuttles the methylamine group of glycine from the P protein to the T protein. This Rhizobium etli (strain CIAT 652) protein is Glycine cleavage system H protein.